The primary structure comprises 380 residues: Probable protein phosphatase 2C 2 (380 aa).

Positions 122–376 constitute a PPM-type phosphatase domain; the sequence is GYSVYCKRGK…DDISVMLIQL (255 aa). Mn(2+) contacts are provided by aspartate 158, glycine 159, aspartate 321, and aspartate 367.

The protein belongs to the PP2C family. The cofactor is Mg(2+). Mn(2+) serves as cofactor.

The enzyme catalyses O-phospho-L-seryl-[protein] + H2O = L-seryl-[protein] + phosphate. The catalysed reaction is O-phospho-L-threonyl-[protein] + H2O = L-threonyl-[protein] + phosphate. The sequence is that of Probable protein phosphatase 2C 2 from Arabidopsis thaliana (Mouse-ear cress).